Consider the following 369-residue polypeptide: Queuine tRNA-ribosyltransferase accessory subunit 2 (369 aa).

A disordered region spans residues 263-282 (SSKLTEVEEENGNDSSNDQD). The Zn(2+) site is built by Cys308, Cys310, Cys313, and His339.

It belongs to the queuine tRNA-ribosyltransferase family. QTRT2 subfamily. In terms of assembly, heterodimer of a catalytic subunit and an accessory subunit. Requires Zn(2+) as cofactor.

Its subcellular location is the cytoplasm. In terms of biological role, non-catalytic subunit of the queuine tRNA-ribosyltransferase (TGT) that catalyzes the base-exchange of a guanine (G) residue with queuine (Q) at position 34 (anticodon wobble position) in tRNAs with GU(N) anticodons (tRNA-Asp, -Asn, -His and -Tyr), resulting in the hypermodified nucleoside queuosine (7-(((4,5-cis-dihydroxy-2-cyclopenten-1-yl)amino)methyl)-7-deazaguanosine). The sequence is that of Queuine tRNA-ribosyltransferase accessory subunit 2 from Trichoplax adhaerens (Trichoplax reptans).